We begin with the raw amino-acid sequence, 295 residues long: 4-diphosphocytidyl-2-C-methyl-D-erythritol kinase (295 aa).

Lys-18 is a catalytic residue. Residue 101–111 (PMGGGIGGGSS) participates in ATP binding. Residue Asp-143 is part of the active site.

The protein belongs to the GHMP kinase family. IspE subfamily.

The catalysed reaction is 4-CDP-2-C-methyl-D-erythritol + ATP = 4-CDP-2-C-methyl-D-erythritol 2-phosphate + ADP + H(+). It functions in the pathway isoprenoid biosynthesis; isopentenyl diphosphate biosynthesis via DXP pathway; isopentenyl diphosphate from 1-deoxy-D-xylulose 5-phosphate: step 3/6. Functionally, catalyzes the phosphorylation of the position 2 hydroxy group of 4-diphosphocytidyl-2C-methyl-D-erythritol. This is 4-diphosphocytidyl-2-C-methyl-D-erythritol kinase from Vibrio cholerae serotype O1 (strain ATCC 39315 / El Tor Inaba N16961).